A 117-amino-acid chain; its full sequence is Glycine cleavage system H-like protein (117 aa).

In terms of domain architecture, Lipoyl-binding spans 21-103 (IVKLGLSSQM…ESEGWFVVLQ (83 aa)). Lys62 carries the N6-lipoyllysine modification.

This sequence belongs to the GcvH family. It depends on (R)-lipoate as a cofactor.

In Chlamydia trachomatis serovar D (strain ATCC VR-885 / DSM 19411 / UW-3/Cx), this protein is Glycine cleavage system H-like protein.